We begin with the raw amino-acid sequence, 534 residues long: Glucans biosynthesis protein D (534 aa).

The segment at residues 1–26 (MQRRDFIRNASLALAAFGLPSLPACA) is a signal peptide (tat-type signal).

This sequence belongs to the OpgD/OpgG family. Post-translationally, predicted to be exported by the Tat system. The position of the signal peptide cleavage has not been experimentally proven.

Its subcellular location is the periplasm. It participates in glycan metabolism; osmoregulated periplasmic glucan (OPG) biosynthesis. Its function is as follows. Probably involved in the control of the structural glucose backbone of osmoregulated periplasmic glucans (OPGs). The protein is Glucans biosynthesis protein D of Stenotrophomonas maltophilia (strain R551-3).